The sequence spans 405 residues: Arginine biosynthesis bifunctional protein ArgJ (405 aa).

6 residues coordinate substrate: Thr152, Lys178, Thr189, Glu276, Asn400, and Thr405. The active-site Nucleophile is Thr189.

Belongs to the ArgJ family. In terms of assembly, heterotetramer of two alpha and two beta chains.

It localises to the cytoplasm. It carries out the reaction N(2)-acetyl-L-ornithine + L-glutamate = N-acetyl-L-glutamate + L-ornithine. The catalysed reaction is L-glutamate + acetyl-CoA = N-acetyl-L-glutamate + CoA + H(+). The protein operates within amino-acid biosynthesis; L-arginine biosynthesis; L-ornithine and N-acetyl-L-glutamate from L-glutamate and N(2)-acetyl-L-ornithine (cyclic): step 1/1. It participates in amino-acid biosynthesis; L-arginine biosynthesis; N(2)-acetyl-L-ornithine from L-glutamate: step 1/4. In terms of biological role, catalyzes two activities which are involved in the cyclic version of arginine biosynthesis: the synthesis of N-acetylglutamate from glutamate and acetyl-CoA as the acetyl donor, and of ornithine by transacetylation between N(2)-acetylornithine and glutamate. In Pseudomonas syringae pv. syringae (strain B728a), this protein is Arginine biosynthesis bifunctional protein ArgJ.